We begin with the raw amino-acid sequence, 468 residues long: ATP synthase subunit beta (468 aa).

Residue 155–162 coordinates ATP; sequence GGAGVGKT.

The protein belongs to the ATPase alpha/beta chains family. F-type ATPases have 2 components, CF(1) - the catalytic core - and CF(0) - the membrane proton channel. CF(1) has five subunits: alpha(3), beta(3), gamma(1), delta(1), epsilon(1). CF(0) has three main subunits: a(1), b(2) and c(9-12). The alpha and beta chains form an alternating ring which encloses part of the gamma chain. CF(1) is attached to CF(0) by a central stalk formed by the gamma and epsilon chains, while a peripheral stalk is formed by the delta and b chains.

The protein resides in the cell membrane. It carries out the reaction ATP + H2O + 4 H(+)(in) = ADP + phosphate + 5 H(+)(out). Functionally, produces ATP from ADP in the presence of a proton gradient across the membrane. The catalytic sites are hosted primarily by the beta subunits. The chain is ATP synthase subunit beta from Streptococcus thermophilus (strain CNRZ 1066).